Reading from the N-terminus, the 566-residue chain is E3 ubiquitin-protein ligase RNF220 (566 aa).

Lys-277 is covalently cross-linked (Glycyl lysine isopeptide (Lys-Gly) (interchain with G-Cter in SUMO2)). A disordered region spans residues 277-297; the sequence is KREGESPTASPHSSATDDLHH. The residue at position 390 (Ser-390) is a Phosphoserine. The stretch at 485–513 forms a coiled coil; that stretch reads EDSAVTTFEALKARVRELERQLSRGDRYK. The segment at 514 to 522 is required for targeting to the cytoplasm; it reads CLICMDSYS. The RING-type zinc finger occupies 514-553; it reads CLICMDSYSMPLTSIQCWHVHCEECWLRTLGAKKLCPQCN.

In terms of assembly, interacts with SIN3B. Interacts with CTNNB1 (via Armadillo repeats 2-8). Interacts with USP7 (via MATH domain). Post-translationally, auto-ubiquitinated; leads to proteasomal degradation. As to expression, ubiquitously expressed. Abundant in brain and spinal cord, particularly in the cerebellum and cerebral cortex. In fetal tissues expressed in the cerebellum, spinal cord and cortex.

It is found in the cytoplasm. The protein localises to the nucleus. The catalysed reaction is S-ubiquitinyl-[E2 ubiquitin-conjugating enzyme]-L-cysteine + [acceptor protein]-L-lysine = [E2 ubiquitin-conjugating enzyme]-L-cysteine + N(6)-ubiquitinyl-[acceptor protein]-L-lysine.. It participates in protein modification; protein ubiquitination. Functionally, E3 ubiquitin-protein ligase that promotes the ubiquitination and proteasomal degradation of SIN3B. Independently of its E3 ligase activity, acts as a CTNNB1 stabilizer through USP7-mediated deubiquitination of CTNNB1 promoting Wnt signaling. Plays a critical role in the regulation of nuclear lamina. This Homo sapiens (Human) protein is E3 ubiquitin-protein ligase RNF220 (RNF220).